The primary structure comprises 338 residues: Methionine import ATP-binding protein MetN 1 (338 aa).

The ABC transporter domain occupies 2–241 (IQLENIEKHY…PNEKLTKDFI (240 aa)). 38–45 (GYSGAGKS) contacts ATP.

Belongs to the ABC transporter superfamily. Methionine importer (TC 3.A.1.24) family. In terms of assembly, the complex is composed of two ATP-binding proteins (MetN), two transmembrane proteins (MetI) and a solute-binding protein (MetQ).

The protein resides in the cell membrane. The catalysed reaction is L-methionine(out) + ATP + H2O = L-methionine(in) + ADP + phosphate + H(+). The enzyme catalyses D-methionine(out) + ATP + H2O = D-methionine(in) + ADP + phosphate + H(+). Functionally, part of the ABC transporter complex MetNIQ involved in methionine import. Responsible for energy coupling to the transport system. The protein is Methionine import ATP-binding protein MetN 1 of Oceanobacillus iheyensis (strain DSM 14371 / CIP 107618 / JCM 11309 / KCTC 3954 / HTE831).